An 879-amino-acid polypeptide reads, in one-letter code: Alanine--tRNA ligase (879 aa).

The Zn(2+) site is built by His-566, His-570, Cys-668, and His-672.

The protein belongs to the class-II aminoacyl-tRNA synthetase family. Zn(2+) is required as a cofactor.

The protein localises to the cytoplasm. It carries out the reaction tRNA(Ala) + L-alanine + ATP = L-alanyl-tRNA(Ala) + AMP + diphosphate. In terms of biological role, catalyzes the attachment of alanine to tRNA(Ala) in a two-step reaction: alanine is first activated by ATP to form Ala-AMP and then transferred to the acceptor end of tRNA(Ala). Also edits incorrectly charged Ser-tRNA(Ala) and Gly-tRNA(Ala) via its editing domain. In Oceanobacillus iheyensis (strain DSM 14371 / CIP 107618 / JCM 11309 / KCTC 3954 / HTE831), this protein is Alanine--tRNA ligase.